A 320-amino-acid polypeptide reads, in one-letter code: Probable cell division protein WhiA (320 aa).

The segment at residues 276–310 (TLKELGELVSGGKISKSGINHRLRKIDEIAERLRA) is a DNA-binding region (H-T-H motif).

This sequence belongs to the WhiA family.

In terms of biological role, involved in cell division and chromosome segregation. The protein is Probable cell division protein WhiA of Geobacillus sp. (strain WCH70).